The following is a 208-amino-acid chain: Uracil phosphoribosyltransferase (208 aa).

5-phospho-alpha-D-ribose 1-diphosphate is bound by residues Arg-78, Arg-103, and 130-138; that span reads DPMLATGGS. Uracil contacts are provided by residues Ile-193 and 198-200; that span reads GDA. Position 199 (Asp-199) interacts with 5-phospho-alpha-D-ribose 1-diphosphate.

Belongs to the UPRTase family. Mg(2+) serves as cofactor.

The enzyme catalyses UMP + diphosphate = 5-phospho-alpha-D-ribose 1-diphosphate + uracil. Its pathway is pyrimidine metabolism; UMP biosynthesis via salvage pathway; UMP from uracil: step 1/1. Allosterically activated by GTP. Catalyzes the conversion of uracil and 5-phospho-alpha-D-ribose 1-diphosphate (PRPP) to UMP and diphosphate. The polypeptide is Uracil phosphoribosyltransferase (Trichlorobacter lovleyi (strain ATCC BAA-1151 / DSM 17278 / SZ) (Geobacter lovleyi)).